We begin with the raw amino-acid sequence, 219 residues long: Proteasome subunit beta type-9 (219 aa).

Positions 1–20 are cleaved as a propeptide — removed in mature form; the sequence is MLRAGAPTAGSFRTEEVHTG. Residue threonine 21 is the Nucleophile of the active site. Residues lysine 53 and lysine 109 each carry the N6-acetyllysine modification.

The protein belongs to the peptidase T1B family. The 26S proteasome consists of a 20S proteasome core and two 19S regulatory subunits. The 20S proteasome core is composed of 28 subunits that are arranged in four stacked rings, resulting in a barrel-shaped structure. The two end rings are each formed by seven alpha subunits, and the two central rings are each formed by seven beta subunits. The catalytic chamber with the active sites is on the inside of the barrel. Component of the immunoproteasome, where it displaces the equivalent housekeeping subunit PSMB6. Component of the spermatoproteasome, a form of the proteasome specifically found in testis. Autocleaved. The resulting N-terminal Thr residue of the mature subunit is responsible for the nucleophile proteolytic activity.

The protein resides in the cytoplasm. It localises to the nucleus. The catalysed reaction is Cleavage of peptide bonds with very broad specificity.. In terms of biological role, the proteasome is a multicatalytic proteinase complex which is characterized by its ability to cleave peptides with Arg, Phe, Tyr, Leu, and Glu adjacent to the leaving group at neutral or slightly basic pH. The proteasome has an ATP-dependent proteolytic activity. This subunit is involved in antigen processing to generate class I binding peptides. The protein is Proteasome subunit beta type-9 (Psmb9) of Mus spicilegus (Steppe mouse).